Reading from the N-terminus, the 130-residue chain is Small ribosomal subunit protein uS9 (130 aa).

This sequence belongs to the universal ribosomal protein uS9 family.

This is Small ribosomal subunit protein uS9 from Shewanella denitrificans (strain OS217 / ATCC BAA-1090 / DSM 15013).